The primary structure comprises 179 residues: Large ribosomal subunit protein uL6 (179 aa).

This sequence belongs to the universal ribosomal protein uL6 family. In terms of assembly, part of the 50S ribosomal subunit.

Functionally, this protein binds to the 23S rRNA, and is important in its secondary structure. It is located near the subunit interface in the base of the L7/L12 stalk, and near the tRNA binding site of the peptidyltransferase center. This chain is Large ribosomal subunit protein uL6, found in Crocosphaera subtropica (strain ATCC 51142 / BH68) (Cyanothece sp. (strain ATCC 51142)).